The chain runs to 1118 residues: Cytospin-A (1118 aa).

4 disordered regions span residues 1–63, 75–176, 294–324, and 359–391; these read MKKA…AGMA, KKST…NQIS, SLSP…GSVE, and SSDD…NASE. The span at 80 to 90 shows a compositional bias: low complexity; the sequence is SSAAPSAPAPA. The span at 93–117 shows a compositional bias: polar residues; the sequence is ISENKSKISTGTSSSAKRSTSAGNK. Positions 120 to 131 are enriched in basic and acidic residues; it reads SSTRERLRERTR. Positions 133–145 are enriched in polar residues; sequence NQSKKLPSVSQGA. Basic and acidic residues predominate over residues 158-171; the sequence is TAAEGDIRMSKSKS. The stretch at 168–281 forms a coiled coil; the sequence is KSKSDNQISD…LNALGFSLEQ (114 aa). The span at 294–304 shows a compositional bias: polar residues; that stretch reads SLSPEITPGNQ. Residues 359-373 are compositionally biased toward low complexity; the sequence is SSDDALDAPSSSESE. Serine 385, serine 386, and serine 390 each carry phosphoserine. 2 coiled-coil regions span residues 395–450 and 488–808; these read ACLT…MESL and RYME…RGRV. A phosphoserine mark is found at serine 869, serine 882, and serine 888. Residues 921–999 form a disordered region; the sequence is TSSTSRPASL…STRSRIREER (79 aa). Positions 947–957 are enriched in basic and acidic residues; the sequence is RSSEEMKRDIS. The segment covering 972–992 has biased composition (low complexity); the sequence is TTSPQLSLSSSPTASVTPSTR. Positions 1012–1117 constitute a Calponin-homology (CH) domain; the sequence is GSKRNALLKW…YVTAIYKYFE (106 aa).

It belongs to the cytospin-A family. In terms of assembly, may interact with both microtubules and actin cytoskeleton.

The protein resides in the cytoplasm. Its subcellular location is the cytoskeleton. The protein localises to the spindle. It is found in the cell junction. It localises to the gap junction. Functionally, involved in cytokinesis and spindle organization. May play a role in actin cytoskeleton organization and microtubule stabilization and hence required for proper cell adhesion and migration. In Mus musculus (Mouse), this protein is Cytospin-A (Specc1l).